Consider the following 346-residue polypeptide: Deoxyhypusine hydroxylase (346 aa).

HEAT-like PBS-type repeat units lie at residues 71–100 (VLLRHEVAYVIGQISNEKCNDILIKLLNDT), 104–133 (LMVRHEAAEGLAAIGSDSNIEVIKKFLNDE), 213–242 (LKLRYEALFKLRDMETDVSINALGEVLIKD), 246–275 (AIFRHEVAFVLGQALHLNSLKYLISSLQNV), and 279–320 (EMVR…SKDA). Fe cation is bound by residues His-75, His-108, and Glu-109. His-250, His-283, and Glu-284 together coordinate Fe cation.

This sequence belongs to the deoxyhypusine hydroxylase family. Requires Fe(2+) as cofactor.

It catalyses the reaction [eIF5A protein]-deoxyhypusine + AH2 + O2 = [eIF5A protein]-hypusine + A + H2O. It functions in the pathway protein modification; eIF5A hypusination. Functionally, catalyzes the hydroxylation of the N(6)-(4-aminobutyl)-L-lysine intermediate produced by deoxyhypusine synthase/DHPS on a critical lysine of the eukaryotic translation initiation factor 5A/eIF-5A. This is the second step of the post-translational modification of that lysine into an unusual amino acid residue named hypusine. Hypusination is unique to mature eIF-5A factor and is essential for its function. This Plasmodium vivax (strain Salvador I) protein is Deoxyhypusine hydroxylase.